The primary structure comprises 139 residues: Cytochrome c-551 (139 aa).

The N-terminal stretch at 1-20 (MTRTLAVVLAMTFSAAPVFA) is a signal peptide. Positions 34, 37, 38, and 116 each coordinate heme c.

It belongs to the cytochrome c family. In terms of processing, binds 1 heme c group covalently per subunit.

The polypeptide is Cytochrome c-551 (Roseobacter denitrificans (strain ATCC 33942 / OCh 114) (Erythrobacter sp. (strain OCh 114))).